We begin with the raw amino-acid sequence, 302 residues long: MAHDMLFRGVAPALVTPFTSDDDIDEAAFRRLIDAQIEGGVSALVVLGTTGENPTITEDERRRIVDAALDAADGRVPVIVGTGTNNTDESVAFSKAAVDAGADGLLVVGPYYNKPSQAGFAAHVETIAAAAEAPIILYNVPGRTSFNIAPETALHLAEEVPHVAGIKEASGDIEQIDDLLAHRPDGFGVYSGDDEMTLPLLAMGGDGAVSVISNALPGPFCELVAAGLDDDLATARDRHAELLPAMRACFLETNPVPIKDVCAALGWMEPHVRLPLTPMDERSPVRQRVLSAFDDLIDVTVA.

Pyruvate is bound at residue Thr50. Tyr138 acts as the Proton donor/acceptor in catalysis. The active-site Schiff-base intermediate with substrate is the Lys167. Val209 provides a ligand contact to pyruvate.

Belongs to the DapA family. In terms of assembly, homotetramer; dimer of dimers.

Its subcellular location is the cytoplasm. The enzyme catalyses L-aspartate 4-semialdehyde + pyruvate = (2S,4S)-4-hydroxy-2,3,4,5-tetrahydrodipicolinate + H2O + H(+). Its pathway is amino-acid biosynthesis; L-lysine biosynthesis via DAP pathway; (S)-tetrahydrodipicolinate from L-aspartate: step 3/4. Its function is as follows. Catalyzes the condensation of (S)-aspartate-beta-semialdehyde [(S)-ASA] and pyruvate to 4-hydroxy-tetrahydrodipicolinate (HTPA). In Salinibacter ruber (strain DSM 13855 / M31), this protein is 4-hydroxy-tetrahydrodipicolinate synthase.